A 276-amino-acid chain; its full sequence is Urease accessory protein UreD (276 aa).

It belongs to the UreD family. In terms of assembly, ureD, UreF and UreG form a complex that acts as a GTP-hydrolysis-dependent molecular chaperone, activating the urease apoprotein by helping to assemble the nickel containing metallocenter of UreC. The UreE protein probably delivers the nickel.

It is found in the cytoplasm. In terms of biological role, required for maturation of urease via the functional incorporation of the urease nickel metallocenter. The sequence is that of Urease accessory protein UreD from Polaromonas naphthalenivorans (strain CJ2).